The sequence spans 362 residues: Putative gustatory receptor 89a (362 aa).

Topologically, residues 1–38 (MLRFPHVCGLCLLLKYWQILALAPFRTSEPMVARCQRW) are cytoplasmic. The chain crosses the membrane as a helical span at residues 39–59 (MTLIAVFRWLLLTSMAPFVLW). The Extracellular portion of the chain corresponds to 60–74 (KSAAMYEATNVRHSM). A helical transmembrane segment spans residues 75–95 (VFKTIALATMTGDVCISLALL). The Cytoplasmic segment spans residues 96–126 (GNHLWNRRELANLVNDLARLHRRRRLSWWST). The chain crosses the membrane as a helical span at residues 127 to 147 (LFLWLKLLLSLYDLLCSVPFL). Residues 148-166 (KGAGGRLPWSQLVAYGVQL) are Extracellular-facing. The chain crosses the membrane as a helical span at residues 167–187 (YFQHVASVYGNGIFGGILLML). The Cytoplasmic portion of the chain corresponds to 188–223 (ECYNQLEREEPTNLARLLQKEYSWLRLIQRFVKLFQ). The helical transmembrane segment at 224-244 (LGIFLLVLGSFVNIMVNIYAF) threads the bilayer. The Extracellular portion of the chain corresponds to 245–255 (MSYYVSLHGVP). A helical transmembrane segment spans residues 256–276 (LTISNNCLVLAIQLYAVILAA). At 277 to 333 (HLCQVRSAKLRKKCLQLEYVPEGLTQEQAMASTPFPVLTPTGNVKFRILGVFILDNS) the chain is on the cytoplasmic side. The chain crosses the membrane as a helical span at residues 334-354 (FWLFLVSYAMNFIVVILQTSF). Residues 355–362 (EHINHGEI) are Extracellular-facing.

Belongs to the insect chemoreceptor superfamily. Gustatory receptor (GR) family. Gr77a subfamily.

It localises to the cell membrane. Probable gustatory receptor which mediates acceptance or avoidance behavior, depending on its substrates. The sequence is that of Putative gustatory receptor 89a (Gr89a) from Drosophila melanogaster (Fruit fly).